We begin with the raw amino-acid sequence, 199 residues long: Chaperone protein TorD (199 aa).

It belongs to the TorD/DmsD family. TorD subfamily.

Its subcellular location is the cytoplasm. Involved in the biogenesis of TorA. Acts on TorA before the insertion of the molybdenum cofactor and, as a result, probably favors a conformation of the apoenzyme that is competent for acquiring the cofactor. In Escherichia coli (strain K12 / MC4100 / BW2952), this protein is Chaperone protein TorD.